A 78-amino-acid polypeptide reads, in one-letter code: Beta-defensin 105A (78 aa).

The N-terminal stretch at 1 to 27 (MALIRKTFYFLFAVFFILVQLPSGCQA) is a signal peptide. Intrachain disulfides connect Cys43/Cys74, Cys53/Cys67, and Cys57/Cys73.

Belongs to the beta-defensin family.

Its subcellular location is the secreted. In terms of biological role, has antimicrobial activity. The protein is Beta-defensin 105A (DEFB105A) of Gorilla gorilla gorilla (Western lowland gorilla).